The chain runs to 236 residues: Small ribosomal subunit protein eS6 (236 aa).

Phosphoserine occurs at positions 232 and 233.

The protein belongs to the eukaryotic ribosomal protein eS6 family. Phosphorylated.

The chain is Small ribosomal subunit protein eS6 (RPS6A) from Candida glabrata (strain ATCC 2001 / BCRC 20586 / JCM 3761 / NBRC 0622 / NRRL Y-65 / CBS 138) (Yeast).